Reading from the N-terminus, the 191-residue chain is Fe/S biogenesis protein NfuA (191 aa).

Residues Cys-149 and Cys-152 each coordinate [4Fe-4S] cluster.

It belongs to the NfuA family. Homodimer. [4Fe-4S] cluster serves as cofactor.

Functionally, involved in iron-sulfur cluster biogenesis. Binds a 4Fe-4S cluster, can transfer this cluster to apoproteins, and thereby intervenes in the maturation of Fe/S proteins. Could also act as a scaffold/chaperone for damaged Fe/S proteins. This Pseudoalteromonas translucida (strain TAC 125) protein is Fe/S biogenesis protein NfuA.